The following is a 274-amino-acid chain: ATP synthase subunit a (274 aa).

Helical transmembrane passes span 43–63 (TLNI…LFVF), 103–123 (VIAP…MMDL), 149–169 (DVSI…FYSI), 223–243 (LIFI…LSLP), and 245–265 (AIFH…LTIV).

This sequence belongs to the ATPase A chain family. In terms of assembly, F-type ATPases have 2 components, CF(1) - the catalytic core - and CF(0) - the membrane proton channel. CF(1) has five subunits: alpha(3), beta(3), gamma(1), delta(1), epsilon(1). CF(0) has three main subunits: a(1), b(2) and c(9-12). The alpha and beta chains form an alternating ring which encloses part of the gamma chain. CF(1) is attached to CF(0) by a central stalk formed by the gamma and epsilon chains, while a peripheral stalk is formed by the delta and b chains.

The protein localises to the cell inner membrane. In terms of biological role, key component of the proton channel; it plays a direct role in the translocation of protons across the membrane. The chain is ATP synthase subunit a from Yersinia enterocolitica serotype O:8 / biotype 1B (strain NCTC 13174 / 8081).